A 254-amino-acid chain; its full sequence is MNTNNQETSNVVKLSVSRFERSTKNRHLLPILVERFDSSSPVTEWDVHVFTDDSHPVYPVFQPLVPCVFKFAQNHRLSTNILVDAGSKVTSWSCVYSKKIHPMVVHHPERMTGSFKKQERNDISLWIGTPTRAATVATSCDSSCFSSPTNDDDEGYDVCGMYDMRPPTTKCQGCSATVSPQSNNSVDEGYDVCGMYDMRPPTTNGHHATVTVNGQNKPVTPPPGIATNPNLTWTLRKFRFFFHQEPETTSIVLY.

This is an uncharacterized protein from Aedes vexans (Inland floodwater mosquito).